Reading from the N-terminus, the 397-residue chain is Iron-sulfur cluster assembly SufBD family protein Mb1497 (397 aa).

This sequence belongs to the iron-sulfur cluster assembly SufBD family.

This chain is Iron-sulfur cluster assembly SufBD family protein Mb1497, found in Mycobacterium bovis (strain ATCC BAA-935 / AF2122/97).